The following is a 208-amino-acid chain: Ribosomal RNA small subunit methyltransferase G (208 aa).

S-adenosyl-L-methionine contacts are provided by residues glycine 75, leucine 80, 126 to 127 (VE), and arginine 141.

This sequence belongs to the methyltransferase superfamily. RNA methyltransferase RsmG family.

It is found in the cytoplasm. The catalysed reaction is guanosine(527) in 16S rRNA + S-adenosyl-L-methionine = N(7)-methylguanosine(527) in 16S rRNA + S-adenosyl-L-homocysteine. Its function is as follows. Specifically methylates the N7 position of guanine in position 527 of 16S rRNA. In Marinomonas sp. (strain MWYL1), this protein is Ribosomal RNA small subunit methyltransferase G.